The primary structure comprises 478 residues: Pathogenicity cluster 5 protein d (478 aa).

Positions 1–19 (MQIQNLIAALAGMAVVAEA) are cleaved as a signal peptide. 2 disordered regions span residues 35-89 (RQNK…GQAN) and 299-400 (NGGK…GGKG). The segment covering 38 to 64 (KGGNNNNNNNNNNNNNNNNNKNNGGNN) has biased composition (low complexity). The span at 65 to 89 (QLCLNPNNVQKGSQQAGTPKQGQAN) shows a compositional bias: polar residues. The segment covering 316–326 (NNDGGGGGNDG) has biased composition (gly residues). Low complexity-rich tracts occupy residues 327–348 (GNNS…QNGA) and 379–393 (TQAG…TNGN). 2 N-linked (GlcNAc...) asparagine glycosylation sites follow: Asn-328 and Asn-332.

Its subcellular location is the secreted. Its function is as follows. Secreted protein required for appressorial penetration of intact host epidermal cells and for pathogenicit, but not for subsequent biotrophic and necrotrophic colonization of leaves. This is Pathogenicity cluster 5 protein d from Colletotrichum graminicola (strain M1.001 / M2 / FGSC 10212) (Maize anthracnose fungus).